A 126-amino-acid chain; its full sequence is Large-conductance mechanosensitive channel (126 aa).

A run of 2 helical transmembrane segments spans residues V14 to L34 and F66 to V86.

It belongs to the MscL family. Homopentamer.

Its subcellular location is the cell membrane. Its function is as follows. Channel that opens in response to stretch forces in the membrane lipid bilayer. May participate in the regulation of osmotic pressure changes within the cell. The polypeptide is Large-conductance mechanosensitive channel (Roseiflexus sp. (strain RS-1)).